A 362-amino-acid chain; its full sequence is Chorismate synthase (362 aa).

Arg-46 serves as a coordination point for NADP(+). Residues 122–124, 238–239, Gly-278, 293–297, and Arg-319 contribute to the FMN site; these read RSS, NA, and KPTPS.

The protein belongs to the chorismate synthase family. Homotetramer. The cofactor is FMNH2.

It catalyses the reaction 5-O-(1-carboxyvinyl)-3-phosphoshikimate = chorismate + phosphate. It participates in metabolic intermediate biosynthesis; chorismate biosynthesis; chorismate from D-erythrose 4-phosphate and phosphoenolpyruvate: step 7/7. In terms of biological role, catalyzes the anti-1,4-elimination of the C-3 phosphate and the C-6 proR hydrogen from 5-enolpyruvylshikimate-3-phosphate (EPSP) to yield chorismate, which is the branch point compound that serves as the starting substrate for the three terminal pathways of aromatic amino acid biosynthesis. This reaction introduces a second double bond into the aromatic ring system. This Campylobacter jejuni (strain RM1221) protein is Chorismate synthase.